The chain runs to 129 residues: Small ribosomal subunit protein uS11 (129 aa).

This sequence belongs to the universal ribosomal protein uS11 family. In terms of assembly, part of the 30S ribosomal subunit. Interacts with proteins S7 and S18. Binds to IF-3.

In terms of biological role, located on the platform of the 30S subunit, it bridges several disparate RNA helices of the 16S rRNA. Forms part of the Shine-Dalgarno cleft in the 70S ribosome. The sequence is that of Small ribosomal subunit protein uS11 from Nitratidesulfovibrio vulgaris (strain DSM 19637 / Miyazaki F) (Desulfovibrio vulgaris).